The primary structure comprises 208 residues: Probable thymidylate kinase (208 aa).

9–16 is an ATP binding site; sequence GIDGAGKS.

The protein belongs to the thymidylate kinase family.

It carries out the reaction dTMP + ATP = dTDP + ADP. The polypeptide is Probable thymidylate kinase (Thermococcus gammatolerans (strain DSM 15229 / JCM 11827 / EJ3)).